A 134-amino-acid polypeptide reads, in one-letter code: Large ribosomal subunit protein uL16c (134 aa).

The protein belongs to the universal ribosomal protein uL16 family. Part of the 50S ribosomal subunit.

It is found in the plastid. The protein resides in the chloroplast. In Atropa belladonna (Belladonna), this protein is Large ribosomal subunit protein uL16c.